The following is a 138-amino-acid chain: MRALWIVAVLLLGVEGSLVEFETLIMKIAGRSGVWYYSSYGCYCGTGGQGWPQDASDRCCFEHDCCYAKLTGCDPITDVYTYRQEDGEIVCGGEDPCGTQICECDKAAAICFRDSMDTYNHKYWRFSLENCQGESQPC.

The N-terminal stretch at 1-37 is a signal peptide; it reads MRALWIVAVLLLGVEGSLVEFETLIMKIAGRSGVWYY. Disulfide bonds link C42-C131, C44-C60, C59-C111, C65-C138, C66-C104, C73-C97, and C91-C102. Residues 78–83 constitute a propeptide that is removed on maturation; sequence DVYTYR. Position 84 is a pyrrolidone carboxylic acid (Q84). The propeptide occupies 119-124; it reads YNHKYW.

This sequence belongs to the phospholipase A2 family. Group II subfamily. D49 sub-subfamily. In terms of assembly, heterodimer of an acidic subunit and a basic chain. The acidic subunit is non-toxic, without enzymatic activity and comprises 3 peptides that are cross-linked by 7 disulfide bridges. The basic subunit is toxic, has phospholipase A2 activity and is composed of a single chain. In terms of tissue distribution, expressed by the venom gland.

It localises to the secreted. Its function is as follows. Snake venom phospholipase A2 (PLA2) that inhibits neuromuscular transmission by blocking acetylcholine release from the nerve termini. In Sistrurus tergeminus (Western massasauga), this protein is Acidic phospholipase A2 homolog sistruxin A.